Consider the following 127-residue polypeptide: Chondrosarcoma-associated gene 2/3 protein (127 aa).

Positions 68–127 are disordered; that stretch reads MSRKPRASSPLSNNHPPTPKRRGSGRHPLNPGPEALSKFPRQPGREKGPIKEVPGTKGSP.

Weakly expressed in kidney. Expressed in various tumor cell lines including carcinomas, myeloid and lymphoid malignancies, melanomas and prostate cancer. Overexpressed in taxol-resistant breast cancer line MDA 435TR and the doxorubicin-resistant multiple myelanoma lines RPMI-8226/Dox40 and RPMI-8226/MDR10V.

Drug-resistance related protein, its expression is associated with the chemotherapy resistant and neoplastic phenotype. May also be linked to the malignant phenotype. The sequence is that of Chondrosarcoma-associated gene 2/3 protein (CSAG2) from Homo sapiens (Human).